The primary structure comprises 893 residues: Eukaryotic translation initiation factor 3 subunit A (893 aa).

The 184-residue stretch at 319–502 folds into the PCI domain; the sequence is LQRMAAHVLL…NSIFFGTDLT (184 aa). Coiled-coil stretches lie at residues 576-707 and 784-881; these read QKII…RAKR and EIAL…REVA. Disordered stretches follow at residues 592 to 634 and 837 to 893; these read AREL…EIQA and AEAR…RRRQ. Positions 837–881 are enriched in basic and acidic residues; it reads AEARRLEREAEDEKRRQQYEKQRAKEEEAERKIQEDRDRLAREVA.

Belongs to the eIF-3 subunit A family. Component of the eukaryotic translation initiation factor 3 (eIF-3) complex. The eIF-3 complex interacts with pix.

It localises to the cytoplasm. In terms of biological role, RNA-binding component of the eukaryotic translation initiation factor 3 (eIF-3) complex, which is involved in protein synthesis of a specialized repertoire of mRNAs and, together with other initiation factors, stimulates binding of mRNA and methionyl-tRNAi to the 40S ribosome. The eIF-3 complex specifically targets and initiates translation of a subset of mRNAs involved in cell proliferation. The polypeptide is Eukaryotic translation initiation factor 3 subunit A (Drosophila grimshawi (Hawaiian fruit fly)).